We begin with the raw amino-acid sequence, 898 residues long: Interleukin enhancer-binding factor 3 (898 aa).

In terms of domain architecture, DZF spans 5-378 (RIFVNDDRHV…PMKRPMEEDG (374 aa)). The tract at residues 52–85 (QEKGNSELSEAENMDTPPDDESKEGAGEQKAEHM) is disordered. The span at 60–73 (SEAENMDTPPDDES) shows a compositional bias: acidic residues. Threonine 67 carries the phosphothreonine modification. Over residues 74–85 (KEGAGEQKAEHM) the composition is skewed to basic and acidic residues. An N6-acetyllysine modification is found at lysine 100. Position 188 is a phosphothreonine; by PKR (threonine 188). Serine 190 is subject to Phosphoserine. Lysine 297 participates in a covalent cross-link: Glycyl lysine isopeptide (Lys-Gly) (interchain with G-Cter in ubiquitin). Threonine 315 bears the Phosphothreonine; by PKR mark. Lysine 348 participates in a covalent cross-link: Glycyl lysine isopeptide (Lys-Gly) (interchain with G-Cter in SUMO1). The tract at residues 363-402 (TTYAITPMKRPMEEDGEEKSPSKKKKKIQKKEEKADPPQA) is disordered. Positions 371 to 389 (KRPMEEDGEEKSPSKKKKK) match the Bipartite nuclear localization signal motif. The span at 372 to 383 (RPMEEDGEEKSP) shows a compositional bias: basic and acidic residues. A phosphoserine mark is found at serine 382 and serine 384. Residue lysine 396 forms a Glycyl lysine isopeptide (Lys-Gly) (interchain with G-Cter in SUMO2) linkage. The region spanning 398 to 467 (DPPQAMNALM…AVKVLQDMGL (70 aa)) is the DRBM 1 domain. Lysine 460 is modified (N6-acetyllysine). 2 disordered regions span residues 466–495 (GLPT…IVAP) and 505–524 (PSSV…LTKH). The span at 472–481 (EGRDSSKGED) shows a compositional bias: basic and acidic residues. Phosphoserine is present on residues serine 476, serine 477, serine 482, and serine 486. Lysine 489 participates in a covalent cross-link: Glycyl lysine isopeptide (Lys-Gly) (interchain with G-Cter in SUMO2). The region spanning 524–590 (HGKNPVMELN…ALAALEKLFP (67 aa)) is the DRBM 2 domain. Position 592 is a phosphothreonine (threonine 592). Residues 609–898 (RGGPKFAAKP…TEHSMNYQYR (290 aa)) are interaction with PRMT1. Disordered regions lie at residues 631–661 (NEVP…GGAN) and 719–898 (QGDS…YQYR). Positions 644-661 (RGGNIRGRGRGRGFGGAN) are enriched in gly residues. Low complexity-rich tracts occupy residues 745 to 769 (SYSS…SSYG), 783 to 794 (GSYSSYSNSYNS), and 802 to 812 (DYSYDSKFNYS). Serine 794, serine 812, serine 814, and serine 818 each carry phosphoserine. Residues 813-822 (GSGGRSGGNS) are compositionally biased toward gly residues. Residues 823–834 (YGSSGSSSYNTG) show a composition bias toward low complexity. Gly residues predominate over residues 835–845 (SHGGYGTGSGG). Over residues 846-886 (SSSYQGKQGGYSSQSNYSSPGSSQSYSGPASSYQSSQGGYS) the composition is skewed to low complexity.

In terms of assembly, identified in a IGF2BP1-dependent mRNP granule complex containing untranslated mRNAs. Interacts with FUS and SMN. Interacts (via C-terminus) with PRMT1. Forms a complex with ILF2. Can also bind to PRKDC/XRCC7: this may stabilize the interaction of PRKDC/XRCC7 and the heterodimeric complex of XRCC6/KU70 and XRCC5/KU80. Forms a heteromeric complex with ZNF346 and ILF3. Found in a nuclear export complex with XPO5, ILF3, Ran and double-stranded RNA or double-stranded minihelix VA1 RNA. Found in a nuclear export complex with XPO5, RAN, ILF3, ZNF346 and double-stranded RNA. Interacts with XPO5 and ZNF346. Forms a complex with ILF2, YLPM1, KHDRBS1, RBMX, NCOA5 and PPP1CA. Interacts with AGO1 and AGO2. Interacts with DHX36; this interaction occurs in a RNA-dependent manner. Interacts with ELAVL1; this interaction occurs in a RNA-dependent manner. Interacts with HAVCR2; this interaction promotes ILF3 ubiquitination and subsequent degradation. Post-translationally, phosphorylated at Thr-188 and Thr-315 by PKR in response to RNA viruses. This phosphorylation results in the dissociation of ILF2 from the ILF2-ILF3 complex resulting in a cytoplasmic sequestration of ILF3 where it can bind to viral RNAs and impede viral replication. In terms of processing, methylated by protein arginine N-methyltransferase 1. In terms of tissue distribution, ubiquitous. Expressed at high levels in the thymus, testis, ovary and at lower levelss in the spleen.

The protein resides in the nucleus. The protein localises to the nucleolus. Its subcellular location is the cytoplasm. Functionally, RNA-binding protein that plays an essential role in the biogenesis of circular RNAs (circRNAs) which are produced by back-splicing circularization of pre-mRNAs. Within the nucleus, promotes circRNAs processing by stabilizing the regulatory elements residing in the flanking introns of the circularized exons. Plays thereby a role in the back-splicing of a subset of circRNAs. As a consequence, participates in a wide range of transcriptional and post-transcriptional processes. Binds to poly-U elements and AU-rich elements (AREs) in the 3'-UTR of target mRNAs. Upon viral infection, ILF3 accumulates in the cytoplasm and participates in the innate antiviral response. Mechanistically, ILF3 becomes phosphorylated and activated by the double-stranded RNA-activated protein kinase/PKR which releases ILF3 from cellular mature circRNAs. In turn, unbound ILF3 molecules are able to interact with and thus inhibit viral mRNAs. This chain is Interleukin enhancer-binding factor 3 (Ilf3), found in Mus musculus (Mouse).